A 394-amino-acid chain; its full sequence is Subtilisin-like protease CPC735_005570 (394 aa).

Positions 1 to 21 (MRAIISVALFLSLSLLSAVNA) are cleaved as a signal peptide. The propeptide occupies 22–114 (AEILSAGDTD…IEHDRIANAR (93 aa)). One can recognise an Inhibitor I9 domain in the interval 37 to 110 (SYIVVMRDGL…AVKYIEHDRI (74 aa)). Residues 123 to 394 (GWNLARISHK…RLLLYNGSGR (272 aa)) enclose the Peptidase S8 domain. Residues Asp155 and His186 each act as charge relay system in the active site. 2 N-linked (GlcNAc...) asparagine glycosylation sites follow: Asn216 and Asn247. The Charge relay system role is filled by Ser340. 2 N-linked (GlcNAc...) asparagine glycosylation sites follow: Asn382 and Asn390.

Belongs to the peptidase S8 family.

Its subcellular location is the secreted. Secreted subtilisin-like serine protease with keratinolytic activity that contributes to pathogenicity. The sequence is that of Subtilisin-like protease CPC735_005570 from Coccidioides posadasii (strain C735) (Valley fever fungus).